The sequence spans 69 residues: Conotoxin reg3f (69 aa).

Positions Met-1–Ala-20 are cleaved as a signal peptide. The propeptide occupies Leu-21–Arg-52. Intrachain disulfides connect Cys-54/Cys-68, Cys-55/Cys-66, and Cys-60/Cys-69. Cys-69 is modified (cysteine amide).

As to expression, expressed by the venom duct.

The protein localises to the secreted. The sequence is that of Conotoxin reg3f from Conus regius (Crown cone).